Here is a 443-residue protein sequence, read N- to C-terminus: Alpha-amylase (443 aa).

An N-terminal signal peptide occupies residues 1 to 24; the sequence is MHNTLFRTALLAAALGSFSHTASA. Histidine 114 and arginine 196 together coordinate substrate. The active-site Nucleophile is aspartate 198. 201–202 provides a ligand contact to substrate; that stretch reads KH. Glutamate 223 functions as the Proton donor in the catalytic mechanism. Glycine 228 and histidine 287 together coordinate substrate.

This sequence belongs to the glycosyl hydrolase 13 family.

Its subcellular location is the secreted. It catalyses the reaction Endohydrolysis of (1-&gt;4)-alpha-D-glucosidic linkages in polysaccharides containing three or more (1-&gt;4)-alpha-linked D-glucose units.. The protein is Alpha-amylase (amyA) of Aeromonas hydrophila.